The following is a 47-amino-acid chain: Lysis protein for colicin E9 (47 aa).

A signal peptide spans methionine 1–alanine 19. Residue cysteine 20 is the site of N-palmitoyl cysteine attachment. Cysteine 20 carries S-diacylglycerol cysteine lipidation.

The protein localises to the cell outer membrane. Lysis proteins are required for both colicin release and partial cell lysis. The polypeptide is Lysis protein for colicin E9 (lys) (Escherichia coli).